A 426-amino-acid chain; its full sequence is Glutamate-1-semialdehyde 2,1-aminomutase (426 aa).

The residue at position 265 (lysine 265) is an N6-(pyridoxal phosphate)lysine.

The protein belongs to the class-III pyridoxal-phosphate-dependent aminotransferase family. HemL subfamily. As to quaternary structure, homodimer. Pyridoxal 5'-phosphate serves as cofactor.

The protein resides in the cytoplasm. The enzyme catalyses (S)-4-amino-5-oxopentanoate = 5-aminolevulinate. It functions in the pathway porphyrin-containing compound metabolism; protoporphyrin-IX biosynthesis; 5-aminolevulinate from L-glutamyl-tRNA(Glu): step 2/2. This chain is Glutamate-1-semialdehyde 2,1-aminomutase, found in Yersinia enterocolitica serotype O:8 / biotype 1B (strain NCTC 13174 / 8081).